The chain runs to 147 residues: D-aminoacyl-tRNA deacylase (147 aa).

The Gly-cisPro motif, important for rejection of L-amino acids signature appears at 137–138 (GP).

It belongs to the DTD family. As to quaternary structure, homodimer.

The protein localises to the cytoplasm. The catalysed reaction is glycyl-tRNA(Ala) + H2O = tRNA(Ala) + glycine + H(+). It carries out the reaction a D-aminoacyl-tRNA + H2O = a tRNA + a D-alpha-amino acid + H(+). In terms of biological role, an aminoacyl-tRNA editing enzyme that deacylates mischarged D-aminoacyl-tRNAs. Also deacylates mischarged glycyl-tRNA(Ala), protecting cells against glycine mischarging by AlaRS. Acts via tRNA-based rather than protein-based catalysis; rejects L-amino acids rather than detecting D-amino acids in the active site. By recycling D-aminoacyl-tRNA to D-amino acids and free tRNA molecules, this enzyme counteracts the toxicity associated with the formation of D-aminoacyl-tRNA entities in vivo and helps enforce protein L-homochirality. This Bacillus velezensis (strain DSM 23117 / BGSC 10A6 / LMG 26770 / FZB42) (Bacillus amyloliquefaciens subsp. plantarum) protein is D-aminoacyl-tRNA deacylase.